Consider the following 458-residue polypeptide: Dynein regulatory complex protein 10 (458 aa).

3 coiled-coil regions span residues 96–137 (GQTL…HKVN), 209–255 (IQDI…KNHL), and 285–379 (QVRL…IRAE). The region spanning 397–426 (MVRAATLIQAVWKGYLVRSILRSKKKKRGK) is the IQ domain. The interval 419–458 (SKKKKRGKGKGKDKGKGKEKPKEEKAKEKKPKAKGKGKKK) is disordered. The segment covering 428-445 (KGKDKGKGKEKPKEEKAK) has biased composition (basic and acidic residues). The segment covering 446 to 458 (EKKPKAKGKGKKK) has biased composition (basic residues).

Belongs to the DRC10 family. Component of the nexin-dynein regulatory complex (N-DRC). Interacts with CFAP52.

The protein resides in the cytoplasm. The protein localises to the cytoskeleton. It is found in the flagellum axoneme. Its function is as follows. Component of the nexin-dynein regulatory complex (N-DRC), a key regulator of ciliary/flagellar motility which maintains the alignment and integrity of the distal axoneme and regulates microtubule sliding in motile axonemes. The polypeptide is Dynein regulatory complex protein 10 (Iqcd) (Mus musculus (Mouse)).